The following is a 152-amino-acid chain: UPF0266 membrane protein YobD (152 aa).

The next 3 helical transmembrane spans lie at 6 to 26 (LVLI…QFIM), 45 to 65 (IDSV…VTNH), and 67 to 87 (ALIT…IFWI).

It belongs to the UPF0266 family.

Its subcellular location is the cell inner membrane. The protein is UPF0266 membrane protein YobD of Escherichia coli O45:K1 (strain S88 / ExPEC).